Reading from the N-terminus, the 491-residue chain is Equilibrative nucleobase transporter 1 (491 aa).

The helical transmembrane segment at 17–37 (LLECLGFAGVLFGWPSLVFVF) threads the bilayer. The N-linked (GlcNAc...) asparagine glycan is linked to Asn-56. 5 helical membrane-spanning segments follow: residues 72–92 (LIFTLGSFMNNFMTFPTGYIF), 102–122 (LIAIFFYTTATLIIAFTSAGS), 123–143 (AVLLFLAMPMLTIGGILFLIT), 156–176 (STIITLYNGAFDSSSAVFLII), and 188–208 (ASFIFISVCSTWHVARTFLLM). N-linked (GlcNAc...) asparagine glycans are attached at residues Asn-220 and Asn-229. Phosphoserine is present on Ser-253. Phosphothreonine is present on Thr-258. A run of 6 helical transmembrane segments spans residues 279–299 (FAWHLVWLSVIQLWHYLFIGT), 319–339 (TNAFAFTQFGVLCAPWNGLLM), 356–376 (STLAVALCSTVPSLALTSLLC), 396–418 (ILQVISRSFLYGSNAAFLTLAFP), 427–447 (GLVMALSAVVSLLQFPIFTLI), and 456–476 (FYVNVMFMLAILLTFFHPFLV).

This sequence belongs to the SLC43A transporter (TC 2.A.1.44) family. In terms of tissue distribution, widely expressed with highest levels in the liver and lung, followed by the pancreas. Highly expressed in macrophages.

Its subcellular location is the basolateral cell membrane. It catalyses the reaction adenine(out) = adenine(in). The catalysed reaction is guanine(out) = guanine(in). It carries out the reaction hypoxanthine(out) = hypoxanthine(in). Its activity is regulated as follows. Adenine transport is strongly inhibited by decynium-22. With respect to regulation, 6-mercaptopurine-transport is inhibited by 6-thioguanine, 6-methylmercaptopurine and decynium-22. Its function is as follows. Sodium-independent purine-selective nucleobase transporter which mediates the equilibrative transport of extracellular purine nucleobases such as adenine, guanine and hypoxanthine. May regulate fatty acid (FA) transport in adipocytes, acting as a positive regulator of FA efflux and as a negative regulator of FA uptake. Sodium-independent purine-selective nucleobase transporter which mediates the equilibrative transport of extracellular purine nucleobase adenine. Mediates the influx and efflux of the purine nucleobase analog drug 6-mercaptopurine across the membrane. The polypeptide is Equilibrative nucleobase transporter 1 (SLC43A3) (Homo sapiens (Human)).